The primary structure comprises 372 residues: tRNA pseudouridine synthase D (372 aa).

The active-site Nucleophile is aspartate 85. The region spanning 160-330 (GFTNYFGYQR…MQGSRRFMWG (171 aa)) is the TRUD domain.

Belongs to the pseudouridine synthase TruD family.

The catalysed reaction is uridine(13) in tRNA = pseudouridine(13) in tRNA. Responsible for synthesis of pseudouridine from uracil-13 in transfer RNAs. The protein is tRNA pseudouridine synthase D of Campylobacter jejuni subsp. jejuni serotype O:23/36 (strain 81-176).